The following is a 105-amino-acid chain: ATP-dependent Clp protease adapter protein ClpS (105 aa).

Belongs to the ClpS family. As to quaternary structure, binds to the N-terminal domain of the chaperone ClpA.

Its function is as follows. Involved in the modulation of the specificity of the ClpAP-mediated ATP-dependent protein degradation. The protein is ATP-dependent Clp protease adapter protein ClpS of Aeromonas hydrophila subsp. hydrophila (strain ATCC 7966 / DSM 30187 / BCRC 13018 / CCUG 14551 / JCM 1027 / KCTC 2358 / NCIMB 9240 / NCTC 8049).